The chain runs to 960 residues: Dynamin-like GTPase OPA1, mitochondrial (960 aa).

A mitochondrion-targeting transit peptide spans 1 to 87 (MWRAGRAAVA…IKYGYQPRRN (87 aa)). The Mitochondrial matrix segment spans residues 88–96 (FWPARLAAR). A helical transmembrane segment spans residues 97–113 (LLKLRYIILGSAVGGGY). At 114-770 (TAKKTFDEWK…NAIENMIGPD (657 aa)) the chain is on the mitochondrial intermembrane side. Residues 210–254 (SDKEKIDQLQEELLHTQLKYQRILERLEKENKELRKLVLQKDDKG) adopt a coiled-coil conformation. Positions 217-222 (QLQEEL) match the LQQQIQ motif motif. Residue K228 is modified to N6-acetyllysine. One can recognise a Dynamin-type G domain in the interval 285-561 (QDHLPRVVVV…FWKMVRESVE (277 aa)). The segment at 295-302 (GDQSAGKT) is G1 motif. Residues S298, G300, K301, T302, S303, and G317 each contribute to the GTP site. Residue T302 participates in Mg(2+) binding. The interval 321–324 (MMTR) is G2 motif. 2 residues coordinate Mg(2+): T323 and D398. Residues 398–401 (DLPG) are G3 motif. The tract at residues 467–470 (TKVD) is G4 motif. The GTP site is built by K468, D470, and T503. The interval 501–504 (VVTG) is G5 motif. Stalk region regions lie at residues 589 to 836 (DRNE…IKDT) and 874 to 928 (CNDV…VKLL). A paddle region region spans residues 736 to 856 (SDKQQWDAAI…KTALNHCNLC (121 aa)). Residues 771–781 (WKKRWMYWKNR) lie within the membrane without spanning it. Over 782-960 (TQEQCVHNET…AFIEALHQEK (179 aa)) the chain is Mitochondrial intermembrane. A disulfide bridge connects residues C856 and C874. The stretch at 895–960 (RQQLTNTEVR…AFIEALHQEK (66 aa)) forms a coiled coil.

The protein belongs to the TRAFAC class dynamin-like GTPase superfamily. Dynamin/Fzo/YdjA family. In terms of assembly, oligomeric complex consisting of membrane-bound and soluble forms of OPA1. Interacts with RCC1L; RCC1L acts as a guanine nucleotide exchange factor (GEF) for OPA1 by exchanging bound GDP for free GTP. Interacts with CHCHD3 and IMMT; these interactions occur preferentially with soluble OPA1 forms. Interacts with PRELID1. Cleaved by OMA1 or YME1L downstream of the transmembrane region in response to different signals to generate soluble forms. Cleaved by OMA1 at position S1 following stress conditions, generating the short soluble form (Dynamin-like GTPase OPA1, short form; S-OPA1). AFG3L2 is involved in the regulation of OMA1-dependent processing of OPA1. PARL-dependent proteolytic processing releases an antiapoptotic soluble form not required for mitochondrial fusion. In terms of processing, cleavage at position S2 by YME1L is required to mediate oxidative phosphorylation (OXPHOS)-induced mitochondrial fusion. Cleavage occurs in the sequence motif Leu-Gln-Gln-Gln-Ile-Gln (LQQQIQ). Post-translationally, cleavage at position S3 by YME1L is required for membrane tubulation. As to expression, detected in brain (at protein level). Detected in brain, brain stem, heart, kidney, liver and skeletal muscle.

The protein localises to the mitochondrion inner membrane. It localises to the mitochondrion intermembrane space. The enzyme catalyses GTP + H2O = GDP + phosphate + H(+). With respect to regulation, activated by guanine nucleotide exchange factor RCC1L. In terms of biological role, dynamin-related GTPase that is essential for normal mitochondrial morphology by mediating fusion of the mitochondrial inner membranes, regulating cristae morphology and maintaining respiratory chain function. Exists in two forms: the transmembrane, long form (Dynamin-like GTPase OPA1, long form; L-OPA1), which is tethered to the inner mitochondrial membrane, and the short soluble form (Dynamin-like GTPase OPA1, short form; S-OPA1), which results from proteolytic cleavage and localizes in the intermembrane space. Both forms (L-OPA1 and S-OPA1) cooperate to catalyze the fusion of the mitochondrial inner membrane. The equilibrium between L-OPA1 and S-OPA1 is essential: excess levels of S-OPA1, produced by cleavage by OMA1 following loss of mitochondrial membrane potential, lead to an impaired equilibrium between L-OPA1 and S-OPA1, inhibiting mitochondrial fusion. The balance between L-OPA1 and S-OPA1 also influences cristae shape and morphology. Involved in remodeling cristae and the release of cytochrome c during apoptosis. Proteolytic processing by PARL in response to intrinsic apoptotic signals may lead to disassembly of OPA1 oligomers and release of the caspase activator cytochrome C (CYCS) into the mitochondrial intermembrane space. Acts as a regulator of T-helper Th17 cells, which are characterized by cells with fused mitochondria with tight cristae, by mediating mitochondrial membrane remodeling: OPA1 is required for interleukin-17 (IL-17) production. Its role in mitochondrial morphology is required for mitochondrial genome maintenance. Its function is as follows. Constitutes the transmembrane long form (L-OPA1) that plays a central role in mitochondrial inner membrane fusion and cristae morphology. L-OPA1 and the soluble short form (S-OPA1) form higher-order helical assemblies that coordinate the fusion of mitochondrial inner membranes. Inner membrane-anchored L-OPA1 molecules initiate membrane remodeling by recruiting soluble S-OPA1 to rapidly polymerize into a flexible cylindrical scaffold encaging the mitochondrial inner membrane. Once at the membrane surface, the formation of S-OPA1 helices induce bilayer curvature. OPA1 dimerization through the paddle region, which inserts into cardiolipin-containing membrane, promotes GTP hydrolysis and the helical assembly of a flexible OPA1 lattice on the membrane, which drives membrane curvature and mitochondrial fusion. Plays a role in the maintenance and remodeling of mitochondrial cristae, some invaginations of the mitochondrial inner membrane that provide an increase in the surface area. Probably acts by forming helical filaments at the inside of inner membrane tubes with the shape and dimensions of crista junctions. The equilibrium between L-OPA1 and S-OPA1 influences cristae shape and morphology: increased L-OPA1 levels promote cristae stacking and elongated mitochondria, while increased S-OPA1 levels correlated with irregular cristae packing and round mitochondria shape. Functionally, constitutes the soluble short form (S-OPA1) generated by cleavage by OMA1, which plays a central role in mitochondrial inner membrane fusion and cristae morphology. The transmembrane long form (L-OPA1) and the S-OPA1 form higher-order helical assemblies that coordinate the fusion of mitochondrial inner membranes. Inner membrane-anchored L-OPA1 molecules initiate membrane remodeling by recruiting soluble S-OPA1 to rapidly polymerize into a flexible cylindrical scaffold encaging the mitochondrial inner membrane. Once at the membrane surface, the formation of S-OPA1 helices induce bilayer curvature. OPA1 dimerization through the paddle region, which inserts into cardiolipin-containing membrane, promotes GTP hydrolysis and the helical assembly of a flexible OPA1 lattice on the membrane, which drives membrane curvature and mitochondrial fusion. Excess levels of S-OPA1 produced by cleavage by OMA1 following stress conditions that induce loss of mitochondrial membrane potential, lead to an impaired equilibrium between L-OPA1 and S-OPA1, thereby inhibiting mitochondrial fusion. Involved in mitochondrial safeguard in response to transient mitochondrial membrane depolarization by mediating flickering: cleavage by OMA1 leads to excess production of S-OPA1, preventing mitochondrial hyperfusion. Plays a role in the maintenance and remodeling of mitochondrial cristae, some invaginations of the mitochondrial inner membrane that provide an increase in the surface area. Probably acts by forming helical filaments at the inside of inner membrane tubes with the shape and dimensions of crista junctions. The equilibrium between L-OPA1 and S-OPA1 influences cristae shape and morphology: increased L-OPA1 levels promote cristae stacking and elongated mitochondria, while increased S-OPA1 levels correlated with irregular cristae packing and round mitochondria shape. Isoforms that contain the alternative exon 4b are required for mitochondrial genome maintenance, possibly by anchoring the mitochondrial nucleoids to the inner mitochondrial membrane. This is Dynamin-like GTPase OPA1, mitochondrial from Mus musculus (Mouse).